Here is a 366-residue protein sequence, read N- to C-terminus: uncharacterized protein (366 aa).

An OBG-type G domain is found at 63–288 (ARVAMVGFPS…LLEKMWEYLA (226 aa)). Residues 69-76 (GFPSVGKS), 115-119 (DLPGI), and 246-249 (NKVD) contribute to the GTP site. Residues 288–365 (ALVRVYTKKP…DHEDVIQIVK (78 aa)) enclose the TGS domain.

The protein belongs to the TRAFAC class OBG-HflX-like GTPase superfamily. OBG GTPase family.

This is an uncharacterized protein from Caenorhabditis elegans.